The chain runs to 483 residues: 6-phosphogluconate dehydrogenase, decarboxylating 1 (483 aa).

Residues 11–16, 34–36, 78–80, and asparagine 106 each bind NADP(+); these read GLAVMG, NRT, and VKA. Substrate-binding positions include asparagine 106 and 132 to 134; that span reads SGG. Lysine 186 serves as the catalytic Proton acceptor. Position 189–190 (189–190) interacts with substrate; sequence HN. The Proton donor role is filled by glutamate 193. Substrate contacts are provided by tyrosine 194, lysine 264, arginine 291, arginine 454, and histidine 460.

This sequence belongs to the 6-phosphogluconate dehydrogenase family. In terms of assembly, homodimer.

It localises to the cytoplasm. It carries out the reaction 6-phospho-D-gluconate + NADP(+) = D-ribulose 5-phosphate + CO2 + NADPH. It participates in carbohydrate degradation; pentose phosphate pathway; D-ribulose 5-phosphate from D-glucose 6-phosphate (oxidative stage): step 3/3. Functionally, catalyzes the oxidative decarboxylation of 6-phosphogluconate to ribulose 5-phosphate and CO(2), with concomitant reduction of NADP to NADPH. In Spinacia oleracea (Spinach), this protein is 6-phosphogluconate dehydrogenase, decarboxylating 1 (pgdC).